The chain runs to 262 residues: Ribose-5-phosphate isomerase A (262 aa).

Substrate is bound by residues 33 to 36, 89 to 92, and 102 to 105; these read TGST, DGAD, and KGGG. Residue E111 is the Proton acceptor of the active site. K129 lines the substrate pocket.

This sequence belongs to the ribose 5-phosphate isomerase family. As to quaternary structure, homodimer.

The enzyme catalyses aldehydo-D-ribose 5-phosphate = D-ribulose 5-phosphate. It functions in the pathway carbohydrate degradation; pentose phosphate pathway; D-ribose 5-phosphate from D-ribulose 5-phosphate (non-oxidative stage): step 1/1. Functionally, catalyzes the reversible conversion of ribose-5-phosphate to ribulose 5-phosphate. The polypeptide is Ribose-5-phosphate isomerase A (Roseobacter denitrificans (strain ATCC 33942 / OCh 114) (Erythrobacter sp. (strain OCh 114))).